The sequence spans 60 residues: Large ribosomal subunit protein uL30 (60 aa).

The protein belongs to the universal ribosomal protein uL30 family. Part of the 50S ribosomal subunit.

The chain is Large ribosomal subunit protein uL30 from Shewanella sp. (strain MR-7).